Reading from the N-terminus, the 234-residue chain is MARKTIDSIPEPIALPTEETVQKRIKLKMVDLDAEIAKLNVQSLDSSIQMIRDIDQMNVDAVQTTAALEDQDEQLDKIEANLSNVIDDLNVVSHNITAMEHYCGCGFFRILRAPFKYFRKRERDIIKEEVLEKMTSPKLRRKEESNMMMFTNSSKRRESTGDFMKRLTCDAIEDELERNLMQIDQGLESVKNLAVDMHVQLKLQEPKLNRIEELTETNDFVVEGVNDKVKKLLH.

2 consecutive t-SNARE coiled-coil homology domains span residues 37–99 (AKLN…ITAM) and 170–232 (DAIE…VKKL).

The protein belongs to the SNAP-25 family. In terms of tissue distribution, expressed in intestinal cells.

It localises to the cell membrane. Its function is as follows. t-SNARE protein which regulates the secretion of aex-5 from intestinal cells. Involved in the defecation motor program, which is a coordinated series of three muscle contractions that occurs every 45 seconds. The chain is t-SNARE protein aex-4 from Caenorhabditis elegans.